The chain runs to 376 residues: MTSDPVNTNISSPTLTDRNADESWELLKREFNTLFSNLKTDSKEEGNFTDNKGVIAKKPIVLQDNDDSDFTQNQGKVATATSTTSDRSFKRTLGSIEMKKRYVKKNCQAKFVFNTLEGKEVCSKILQHTLGLLSLLLLTRKIRLLNFSSKLRLVIQQLSLFRYYLRFGNFAINLYKIIKRFRWLREMKKLHYKDQSILFYFKNFRFFDIIEAFYNLTDELILFHKLQSMFGKKNTSHANTNRLMTFVKEQHYILWEVLNILAINKNIEQWRQLIRDEIYLSIYNTSGNAIKEYELKYKLPTNDKVNLELRKNNITLDFYKIILNLLSNLINIKGKRDKYNSELAYEIISVGSGVTELLKLWNRAKVTSANEHTSAV.

As to quaternary structure, homooligomer. Interacts with PEX25 and PEX34.

The protein localises to the peroxisome membrane. Its function is as follows. Required for regulation of peroxisome size and number. Also promotes peroxisome division and biogenesis. This is Peroxisomal membrane protein PEX27 (PEX27) from Saccharomyces cerevisiae (strain ATCC 204508 / S288c) (Baker's yeast).